A 435-amino-acid chain; its full sequence is CBL-interacting protein kinase 28 (435 aa).

Residues 11-265 (YVIGRQLGQG…ISRIKRSAWY (255 aa)) form the Protein kinase domain. ATP is bound by residues 17-25 (LGQGTFGKV) and Lys40. The Proton acceptor role is filled by Asp133. An activation loop region spans residues 151–180 (DFGLSALAESRRQDGLLHTACGTPAYVAPE). Residues 283 to 329 (CTSEAPFSGPTICISSERNQEPPNLHNLNAFDIISLSTGFDLSGLFG) enclose the NAF domain. The tract at residues 334–363 (RRESLFTSRKPAAAVLVKLKELAKALNLKV) is PPI.

Belongs to the protein kinase superfamily. CAMK Ser/Thr protein kinase family. SNF1 subfamily. Requires Mn(2+) as cofactor.

The catalysed reaction is L-seryl-[protein] + ATP = O-phospho-L-seryl-[protein] + ADP + H(+). It carries out the reaction L-threonyl-[protein] + ATP = O-phospho-L-threonyl-[protein] + ADP + H(+). In terms of biological role, CIPK serine-threonine protein kinases interact with CBL proteins. Binding of a CBL protein to the regulatory NAF domain of CIPK protein lead to the activation of the kinase in a calcium-dependent manner. The protein is CBL-interacting protein kinase 28 (CIPK28) of Oryza sativa subsp. japonica (Rice).